A 402-amino-acid chain; its full sequence is 1-deoxy-D-xylulose 5-phosphate reductoisomerase (402 aa).

NADPH-binding residues include Thr-10, Gly-11, Ser-12, Ile-13, Asn-38, and Asn-124. Lys-125 is a binding site for 1-deoxy-D-xylulose 5-phosphate. Glu-126 provides a ligand contact to NADPH. Position 150 (Asp-150) interacts with Mn(2+). 4 residues coordinate 1-deoxy-D-xylulose 5-phosphate: Ser-151, Glu-152, Ser-186, and His-209. Glu-152 lines the Mn(2+) pocket. Position 215 (Gly-215) interacts with NADPH. Positions 222, 227, 228, and 231 each coordinate 1-deoxy-D-xylulose 5-phosphate. Residue Glu-231 participates in Mn(2+) binding.

This sequence belongs to the DXR family. Mg(2+) is required as a cofactor. It depends on Mn(2+) as a cofactor.

It carries out the reaction 2-C-methyl-D-erythritol 4-phosphate + NADP(+) = 1-deoxy-D-xylulose 5-phosphate + NADPH + H(+). The protein operates within isoprenoid biosynthesis; isopentenyl diphosphate biosynthesis via DXP pathway; isopentenyl diphosphate from 1-deoxy-D-xylulose 5-phosphate: step 1/6. Its function is as follows. Catalyzes the NADPH-dependent rearrangement and reduction of 1-deoxy-D-xylulose-5-phosphate (DXP) to 2-C-methyl-D-erythritol 4-phosphate (MEP). The sequence is that of 1-deoxy-D-xylulose 5-phosphate reductoisomerase from Vibrio vulnificus (strain YJ016).